Reading from the N-terminus, the 122-residue chain is Biogenesis of lysosome-related organelles complex 1 subunit BLS1 (122 aa).

S33 bears the Phosphoserine mark.

Belongs to the BLOC1S1 family. Component of the biogenesis of lysosome-related organelles complex-1 (BLOC-1) composed of at least BLI1, BLS1, CNL1, KXD1, SNN1 and VAB2.

It is found in the endosome. Functionally, component of the biogenesis of lysosome-related organelles complex-1 (BLOC-1), a complex involved in endosomal cargo sorting. This is Biogenesis of lysosome-related organelles complex 1 subunit BLS1 (BLS1) from Saccharomyces cerevisiae (strain RM11-1a) (Baker's yeast).